A 464-amino-acid chain; its full sequence is 2-oxoadipate dioxygenase/decarboxylase (464 aa).

2-oxoadipate is bound by residues His70, Arg74, and His226. His70 serves as a coordination point for Fe(2+). 2 residues coordinate Fe(2+): His226 and Glu294. Val402 provides a ligand contact to 2-oxoadipate.

This sequence belongs to the 2-oxoadipate dioxygenase/decarboxylase family. Fe(2+) is required as a cofactor.

The enzyme catalyses 2-oxoadipate + O2 = (R)-2-hydroxyglutarate + CO2. The protein operates within amino-acid degradation. Its activity is regulated as follows. Inhibited by EDTA. Catalyzes the decarboxylation and hydroxylation of 2-oxoadipate (2OA) to form D-2-hydroxyglutarate (D-2-HGA). Is specific for 2-oxoadipate. Is involved in a D-lysine catabolic pathway. This chain is 2-oxoadipate dioxygenase/decarboxylase, found in Pseudomonas putida (strain ATCC 47054 / DSM 6125 / CFBP 8728 / NCIMB 11950 / KT2440).